Consider the following 275-residue polypeptide: Hydroxyethylthiazole kinase (275 aa).

Met50 is a binding site for substrate. Residues Arg126 and Ser171 each contribute to the ATP site. Ala200 is a binding site for substrate.

It belongs to the Thz kinase family. Requires Mg(2+) as cofactor.

It catalyses the reaction 5-(2-hydroxyethyl)-4-methylthiazole + ATP = 4-methyl-5-(2-phosphooxyethyl)-thiazole + ADP + H(+). It functions in the pathway cofactor biosynthesis; thiamine diphosphate biosynthesis; 4-methyl-5-(2-phosphoethyl)-thiazole from 5-(2-hydroxyethyl)-4-methylthiazole: step 1/1. Catalyzes the phosphorylation of the hydroxyl group of 4-methyl-5-beta-hydroxyethylthiazole (THZ). In Acinetobacter baumannii (strain ATCC 17978 / DSM 105126 / CIP 53.77 / LMG 1025 / NCDC KC755 / 5377), this protein is Hydroxyethylthiazole kinase.